Here is a 210-residue protein sequence, read N- to C-terminus: LQTSEIEVFQLLGLDGSTSLIALDIDAARRKLVQLPWVEDVDIRKVYPKTVEVRLKERQAFGIWQHGTELSLIEKSGSVIAPLRDNKFAALPLFVGRDAETGAAGFVAQLADWPEIRNRVRAYVRIAGRRWDLHLDNGIVVKLPEENLPQALQLLARLDLEEKVLSRDVAAVDLRLTDRTTIQLTEGAAERRQTAVDARTKALKKAEKNT.

The POTRA domain maps to 1–58 (LQTSEIEVFQLLGLDGSTSLIALDIDAARRKLVQLPWVEDVDIRKVYPKTVEVRLKER). The chain crosses the membrane as a helical span at residues 8–25 (VFQLLGLDGSTSLIALDI).

It belongs to the FtsQ/DivIB family. FtsQ subfamily.

The protein resides in the cell inner membrane. In terms of biological role, essential cell division protein. The protein is Cell division protein FtsQ of Rhizobium radiobacter (Agrobacterium tumefaciens).